A 58-amino-acid chain; its full sequence is MPDPCCIDKCECKEGGCKAGCKCTSCRCTPCEKCSSGCKCTTKEDCCKTCTKPCSCCP.

The beta stretch occupies residues 1 to 29 (MPDPCCIDKCECKEGGCKAGCKCTSCRCT). A divalent metal cation contacts are provided by Cys5, Cys6, Cys10, Cys12, Cys17, Cys21, Cys23, Cys26, Cys28, Cys31, Cys34, Cys38, Cys40, Cys46, Cys50, Cys54, Cys56, and Cys57. Residues 30 to 58 (PCEKCSSGCKCTTKEDCCKTCTKPCSCCP) are alpha.

Belongs to the metallothionein superfamily. Type 3 family.

In terms of biological role, metallothioneins have a high content of cysteine residues that bind various heavy metals. Class I MTS in marine crustacea are involved in the sequestration of elevated levels of heavy-metal ions. This chain is Metallothionein, found in Carcinus maenas (Common shore crab).